We begin with the raw amino-acid sequence, 1071 residues long: V-type proton ATPase catalytic subunit A (1071 aa).

The residue at position 2 (Ala2) is an N-acetylalanine. Thr131 carries the phosphothreonine modification. 257 to 264 (GAFGCGKT) is an ATP binding site. The region spanning 494–642 (LLGLWIGDGL…LVSLARSLGL (149 aa)) is the DOD-type homing endonuclease domain. Residues Ser858 and Ser928 each carry the phosphoserine modification.

Belongs to the ATPase alpha/beta chains family. V-ATPase is a heteromultimeric enzyme composed of a peripheral catalytic V1 complex (components A to H) attached to an integral membrane V0 proton pore complex (components: a, c, c', c'', d, e, f and VOA1). Interacts with RAV1 and RAV2 components of the RAVE complex, which are essential for the stability and assembly of V-ATPase. This protein undergoes a protein self splicing that involves a post-translational excision of the VDE intervening region (intein) followed by peptide ligation.

The protein localises to the vacuole membrane. The enzyme catalyses ATP + H2O + 4 H(+)(in) = ADP + phosphate + 5 H(+)(out). Catalytic subunit of the V1 complex of vacuolar(H+)-ATPase (V-ATPase), a multisubunit enzyme composed of a peripheral complex (V1) that hydrolyzes ATP and a membrane integral complex (V0) that translocates protons. V-ATPase is responsible for acidifying and maintaining the pH of intracellular compartments. In terms of biological role, PI-SceI is an endonuclease that can cleave at a site present in a VMA1 allele that lacks the derived endonuclease segment of the open reading frame; cleavage at this site only occurs during meiosis and initiates 'homing', a genetic event that converts a VMA1 allele lacking VDE into one that contains it. This chain is V-type proton ATPase catalytic subunit A, found in Saccharomyces cerevisiae (strain ATCC 204508 / S288c) (Baker's yeast).